The following is a 175-amino-acid chain: Probable chemoreceptor glutamine deamidase CheD (175 aa).

Belongs to the CheD family.

It carries out the reaction L-glutaminyl-[protein] + H2O = L-glutamyl-[protein] + NH4(+). In terms of biological role, probably deamidates glutamine residues to glutamate on methyl-accepting chemotaxis receptors (MCPs), playing an important role in chemotaxis. This chain is Probable chemoreceptor glutamine deamidase CheD, found in Jannaschia sp. (strain CCS1).